The primary structure comprises 443 residues: D(2) dopamine receptor (443 aa).

Topologically, residues 1-37 (MDPLNLSWYDDDLESQNWSRPFNGSEGKPGKPHYNYY) are extracellular. N-linked (GlcNAc...) asparagine glycans are attached at residues Asn5, Asn17, and Asn23. Residues 38–60 (AMLLTLLIFIIVFGNVLVCMAVS) traverse the membrane as a helical segment. Residues 61–70 (REKALQTTTN) are Cytoplasmic-facing. The helical transmembrane segment at 71–93 (YLIVSLAVADLLVATLVMPWVVY) threads the bilayer. Over 94-108 (LEVVGEWKFSRIHCD) the chain is Extracellular. An intrachain disulfide couples Cys107 to Cys182. The helical transmembrane segment at 109-130 (IFVTLDVMMCTASILNLCAISI) threads the bilayer. Residues 131–151 (DRYTAVAMPMLYNTRYSSKRR) are Cytoplasmic-facing. The helical transmembrane segment at 152–172 (VTVMIAIVWVLSFTISCPLLF) threads the bilayer. Topologically, residues 173-188 (GLNNTDQNECIIANPA) are extracellular. Residues 189–213 (FVVYSSIVSFYVPFIVTLLVYIKIY) traverse the membrane as a helical segment. Positions 211-373 (KIYIVLRRRR…SQQKEKKATQ (163 aa)) are interaction with PPP1R9B. The Cytoplasmic portion of the chain corresponds to 214–373 (IVLRRRRKRV…SQQKEKKATQ (160 aa)). Residues 282–332 (EMLSSTSPPERTRYSPIPPSHHQLTLPDPSHHGLHSTADSPAKPEKNGHAK) form a disordered region. Residues 323-332 (AKPEKNGHAK) are compositionally biased toward basic and acidic residues. Residues 374 to 395 (MLAIVLGVFIICWLPFFITHIL) traverse the membrane as a helical segment. Topologically, residues 396-409 (NIHCECNIPPVLYS) are extracellular. Cys399 and Cys401 are oxidised to a cystine. Residues 410-431 (AFTWLGYVNSAVNPIIYTTFNI) traverse the membrane as a helical segment. Topologically, residues 432–443 (EFRKAFLKILHC) are cytoplasmic. Cys443 carries S-palmitoyl cysteine lipidation.

Belongs to the G-protein coupled receptor 1 family. In terms of assembly, forms homo- and heterooligomers with DRD4. The interaction with DRD4 may modulate agonist-induced downstream signaling. Interacts with CADPS and CADPS2. Interacts with GPRASP1, PPP1R9B and CLIC6. Interacts with ARRB2. Interacts with HTR2A. Interacts with DRD1. Interacts with KCNA2. Post-translationally, palmitoylated. Palmitoylation which is required for proper localization to the plasma membrane and stability of the receptor could be carried on by ZDHHC4, ZDHHC3 and ZDHHC8.

The protein localises to the cell membrane. It is found in the golgi apparatus membrane. Functionally, dopamine receptor whose activity is mediated by G proteins which inhibit adenylyl cyclase. Positively regulates postnatal regression of retinal hyaloid vessels via suppression of VEGFR2/KDR activity, downstream of OPN5. The chain is D(2) dopamine receptor (DRD2) from Canis lupus familiaris (Dog).